Reading from the N-terminus, the 362-residue chain is Putative sphingolipid delta(4)-desaturase/C4-monooxygenase (362 aa).

3 helical membrane passes run 45–61 (YVVS…CWLL), 71–91 (LEAY…IHDI), and 107–127 (FFGM…FKKY). A Histidine box-1 motif is present at residues 89-93 (HDISH). A Histidine box-2 motif is present at residues 128 to 132 (HVEHH). 2 helical membrane-spanning segments follow: residues 160–177 (LLWL…PLII) and 198–218 (LLIL…GTII). Residues 259 to 263 (HVEHH) carry the Histidine box-3 motif.

It belongs to the fatty acid desaturase type 1 family. DEGS subfamily.

Its subcellular location is the membrane. The enzyme catalyses an N-acyl-15-methylhexadecasphinganine + 2 Fe(II)-[cytochrome b5] + O2 + 2 H(+) = an N-acyl-4-hydroxy-15-methylhexadecasphinganine + 2 Fe(III)-[cytochrome b5] + H2O. The catalysed reaction is an N-acyl-15-methylhexadecasphinganine + 2 Fe(II)-[cytochrome b5] + O2 + 2 H(+) = an N-acyl-15-methylhexadecasphing-4-enine + 2 Fe(III)-[cytochrome b5] + 2 H2O. It catalyses the reaction a dihydroceramide + 2 Fe(II)-[cytochrome b5] + O2 + 2 H(+) = a phytoceramide + 2 Fe(III)-[cytochrome b5] + H2O. It carries out the reaction an N-acylsphinganine + 2 Fe(II)-[cytochrome b5] + O2 + 2 H(+) = an N-acylsphing-4-enine + 2 Fe(III)-[cytochrome b5] + 2 H2O. The enzyme catalyses N-octanoylsphinganine + 2 Fe(II)-[cytochrome b5] + O2 + 2 H(+) = N-octanoyl-4-hydroxysphinganine + 2 Fe(III)-[cytochrome b5] + H2O. The catalysed reaction is an N-acylsphinganine + 2 Fe(II)-[cytochrome b5] + O2 + 2 H(+) = an N-acyl-(4R)-4-hydroxysphinganine + 2 Fe(III)-[cytochrome b5] + H2O. The protein operates within lipid metabolism; sphingolipid metabolism. Its function is as follows. Bifunctional enzyme which acts both as a sphingolipid delta(4)-desaturase and a sphingolipid C4-monooxygenase. C.elegans contain specific sphingoid bases, which are unique or different in structure compared to the sphingoid bases found in other animals. Two examples of these distinctive compounds are: 15-methylhexadecasphinganine and 15-methylhexadecasphing-4-enine and this enzyme can catalyze their conversion. In Caenorhabditis elegans, this protein is Putative sphingolipid delta(4)-desaturase/C4-monooxygenase (ttm-5).